The sequence spans 399 residues: Tryptophan synthase beta chain (399 aa).

Residue K92 is modified to N6-(pyridoxal phosphate)lysine.

This sequence belongs to the TrpB family. In terms of assembly, tetramer of two alpha and two beta chains. Requires pyridoxal 5'-phosphate as cofactor.

The enzyme catalyses (1S,2R)-1-C-(indol-3-yl)glycerol 3-phosphate + L-serine = D-glyceraldehyde 3-phosphate + L-tryptophan + H2O. The protein operates within amino-acid biosynthesis; L-tryptophan biosynthesis; L-tryptophan from chorismate: step 5/5. Functionally, the beta subunit is responsible for the synthesis of L-tryptophan from indole and L-serine. In Acidithiobacillus ferrooxidans (strain ATCC 23270 / DSM 14882 / CIP 104768 / NCIMB 8455) (Ferrobacillus ferrooxidans (strain ATCC 23270)), this protein is Tryptophan synthase beta chain.